Here is a 733-residue protein sequence, read N- to C-terminus: Phosphoribosylformylglycinamidine synthase subunit PurL (733 aa).

His-44 is a catalytic residue. ATP contacts are provided by Tyr-47 and Lys-86. Glu-88 is a Mg(2+) binding site. Substrate contacts are provided by residues 89–92 and Arg-111; that span reads SHNH. His-90 (proton acceptor) is an active-site residue. Mg(2+) is bound at residue Asp-112. Gln-240 lines the substrate pocket. Mg(2+) is bound at residue Asp-268. 312–314 is a substrate binding site; sequence ESQ. Residues Asp-496 and Gly-533 each contribute to the ATP site. Asn-534 lines the Mg(2+) pocket. A substrate-binding site is contributed by Ser-536.

It belongs to the FGAMS family. Monomer. Part of the FGAM synthase complex composed of 1 PurL, 1 PurQ and 2 PurS subunits.

It is found in the cytoplasm. The enzyme catalyses N(2)-formyl-N(1)-(5-phospho-beta-D-ribosyl)glycinamide + L-glutamine + ATP + H2O = 2-formamido-N(1)-(5-O-phospho-beta-D-ribosyl)acetamidine + L-glutamate + ADP + phosphate + H(+). The protein operates within purine metabolism; IMP biosynthesis via de novo pathway; 5-amino-1-(5-phospho-D-ribosyl)imidazole from N(2)-formyl-N(1)-(5-phospho-D-ribosyl)glycinamide: step 1/2. Part of the phosphoribosylformylglycinamidine synthase complex involved in the purines biosynthetic pathway. Catalyzes the ATP-dependent conversion of formylglycinamide ribonucleotide (FGAR) and glutamine to yield formylglycinamidine ribonucleotide (FGAM) and glutamate. The FGAM synthase complex is composed of three subunits. PurQ produces an ammonia molecule by converting glutamine to glutamate. PurL transfers the ammonia molecule to FGAR to form FGAM in an ATP-dependent manner. PurS interacts with PurQ and PurL and is thought to assist in the transfer of the ammonia molecule from PurQ to PurL. This chain is Phosphoribosylformylglycinamidine synthase subunit PurL, found in Wolinella succinogenes (strain ATCC 29543 / DSM 1740 / CCUG 13145 / JCM 31913 / LMG 7466 / NCTC 11488 / FDC 602W) (Vibrio succinogenes).